We begin with the raw amino-acid sequence, 314 residues long: Probable cell division protein WhiA (314 aa).

Residues 274-308 constitute a DNA-binding region (H-T-H motif); sequence SLKELGEMVSTGPISKSGVNHRLRKLNDLADKIRN.

The protein belongs to the WhiA family.

Involved in cell division and chromosome segregation. The sequence is that of Probable cell division protein WhiA from Staphylococcus aureus (strain USA300).